Consider the following 597-residue polypeptide: MFS-type transporter FPY5 (597 aa).

Residues 1 to 55 (MSETTGLPLKHLQGSPPGTPVNTNNESNEASPDDGCRLPDTVTEAEASSDNHGSV) are disordered. Polar residues-rich tracts occupy residues 20-30 (PVNTNNESNEA) and 46-55 (EASSDNHGSV). N-linked (GlcNAc...) asparagine glycosylation occurs at asparagine 25. An N-linked (GlcNAc...) asparagine glycan is attached at asparagine 72. A run of 9 helical transmembrane segments spans residues 94–114 (LSLL…VSIV), 120–140 (FNMA…FLII), 147–167 (IFGC…FSMA), 183–203 (FQGM…PLMV), 214–234 (IMSS…GAIT), 241–261 (WVFY…AFSV), 286–306 (VDFV…FALE), 316–336 (SGAI…FIAW), and 360–380 (FVMG…AALI). Asparagine 390 is a glycosylation site (N-linked (GlcNAc...) asparagine). The next 5 membrane-spanning stretches (helical) occupy residues 402–422 (LPLL…VSKL), 424–444 (VPPL…VGLY), 463–483 (IMGL…PLVV), 498–518 (IRVL…INHI), and 562–582 (EQMR…VLLV).

Belongs to the major facilitator superfamily. TCR/Tet family.

The protein resides in the membrane. The protein operates within secondary metabolite biosynthesis. In terms of biological role, MFS-type transporter; part of the gene cluster that mediates the biosynthesis of the gamma-pyrones fusapyrone (FPY) and deoxyfusapyrone (dFPY). The protein is MFS-type transporter FPY5 of Fusarium mangiferae (Mango malformation disease fungus).